We begin with the raw amino-acid sequence, 250 residues long: Solute carrier family 66 member 2 (250 aa).

A PQ-loop 1 domain is found at 14–80 (RMLVSWGASC…HHFESPLLWQ (67 aa)). 6 helical membrane passes run 15 to 35 (MLVS…PYIP), 49 to 69 (FSIY…LFWF), 72 to 92 (HFES…LLML), 118 to 138 (FFWH…FTGV), 151 to 173 (LFVE…PQLY), and 212 to 232 (FSIC…QVYL). Residues 149–215 (SPLFVEILGF…NQAPFQFSIC (67 aa)) enclose the PQ-loop 2 domain.

The protein resides in the membrane. The chain is Solute carrier family 66 member 2 (slc66a2) from Xenopus laevis (African clawed frog).